An 842-amino-acid polypeptide reads, in one-letter code: Netrin receptor UNC5A (842 aa).

The signal sequence occupies residues Met1–Ala25. The Extracellular portion of the chain corresponds to Gln26 to Tyr306. The 98-residue stretch at Pro44 to Tyr141 folds into the Ig-like domain. 3 cysteine pairs are disulfide-bonded: Cys65–Cys126, Cys77–Cys124, and Cys170–Cys221. N-linked (GlcNAc...) asparagine glycans are attached at residues Asn107 and Asn218. The Ig-like C2-type domain occupies Pro155–Ser234. Positions Asp242–Val294 constitute a TSP type-1 domain. Residues Trp245, Trp248, and Trp251 are each glycosylated (C-linked (Man) tryptophan). Disulfide bonds link Cys254/Cys288, Cys258/Cys293, and Cys266/Cys278. Asn287 carries an N-linked (GlcNAc...) asparagine glycan. A helical transmembrane segment spans residues Val307–Tyr327. Over Cys328 to Cys842 the chain is Cytoplasmic. Residues Asn441–Ala584 enclose the ZU5 domain. The interaction with DCC stretch occupies residues Ser605–Lys623. A Death domain is found at Gln761–Glu841.

It belongs to the unc-5 family. Homodimer and homooligomer. Interacts with the cytoplasmic part of DCC. Interacts with MAGED1. Interacts with PRKCABP, possibly mediating some interaction with PKC. Interacts (via extracellular domain) with FLRT2 (via extracellular domain). Interacts (via extracellular domain) with FLRT3 (via extracellular domain). Post-translationally, phosphorylated on cytoplasmic tyrosine residues. Phosphorylated by PKC in vitro. Proteolytically cleaved by caspases during apoptosis. The cleavage does not take place when the receptor is associated with netrin ligand. Its cleavage by caspases is required to induce apoptosis. In terms of processing, the two extracellular TSRs of UNC5A contain WxxWxxWxxC motifs that can be C-mannosylated on all tryptophans. DPY19L1 preferentially mannosylates the first two tryptophans and DPY19L3 prefers the third. C-mannosylation by DPY19L1 is required for transport of UNC5A from the endoplasmic reticulum to the cell surface.

Its subcellular location is the cell membrane. The protein resides in the membrane raft. The protein localises to the cell projection. It localises to the neuron projection. In terms of biological role, receptor for netrin required for axon guidance. Functions in the netrin signaling pathway and promotes neurite outgrowth in response to NTN1. Mediates axon repulsion of neuronal growth cones in the developing nervous system in response to netrin. Axon repulsion in growth cones may be mediated by its association with DCC that may trigger signaling for repulsion. It also acts as a dependence receptor required for apoptosis induction when not associated with netrin ligand. This Homo sapiens (Human) protein is Netrin receptor UNC5A (UNC5A).